We begin with the raw amino-acid sequence, 107 residues long: Nucleoid-associated protein YaaK (107 aa).

Residues 1-24 (MRGGMGNMQKMMKQMQKMQKDMAK) form a disordered region. Low complexity predominate over residues 8-17 (MQKMMKQMQK).

This sequence belongs to the YbaB/EbfC family. As to quaternary structure, homodimer.

It is found in the cytoplasm. The protein localises to the nucleoid. Functionally, binds to DNA and alters its conformation. May be involved in regulation of gene expression, nucleoid organization and DNA protection. This chain is Nucleoid-associated protein YaaK (yaaK), found in Bacillus subtilis (strain 168).